Reading from the N-terminus, the 233-residue chain is TATA-box-binding protein 1 (233 aa).

2 consecutive repeat copies span residues 58–134 (LQNI…ARIV) and 148–225 (IQNI…YPVL).

The protein belongs to the TBP family. Belongs to the TFIID complex together with the TBP-associated factors (TAFs). Binds DNA as monomer.

The protein localises to the nucleus. Its function is as follows. General transcription factor that functions at the core of the DNA-binding multiprotein factor TFIID. Binding of TFIID to the TATA box is the initial transcriptional step of the pre-initiation complex (PIC), playing a role in the activation of eukaryotic genes transcribed by RNA polymerase II. In Triticum aestivum (Wheat), this protein is TATA-box-binding protein 1 (TBP1).